Reading from the N-terminus, the 193-residue chain is MAQLEYKLVIVGGGGVGKSALTIQLIQNHFIDEYDPTIEDSYRKQVVIDEETCLLDILDTAGQEEYSAMRDQYMRTGQGFVMVYSITSRSSFDEINAFREQILRVKDKDTVPMVLAGNKCDLASERQVTTNEGQELARAFGCPFVETSAKARLNVEECFYGLVREIRKEVIGDKKGGGGKKKKLMGIDRCKLL.

Residue 12–19 (GGGGVGKS) participates in GTP binding. The short motif at 34-42 (YDPTIEDSY) is the Effector region element. GTP contacts are provided by residues 59-63 (DTAGQ) and 118-121 (NKCD). Residue Cys-190 is modified to Cysteine methyl ester. The S-geranylgeranyl cysteine moiety is linked to residue Cys-190. Positions 191 to 193 (KLL) are cleaved as a propeptide — removed in mature form.

It belongs to the small GTPase superfamily. Ras family.

Its subcellular location is the cell membrane. The enzyme catalyses GTP + H2O = GDP + phosphate + H(+). Ras proteins bind GDP/GTP and possess intrinsic GTPase activity. The sequence is that of Ras-like protein 2 (RAS-2) from Physarum polycephalum (Slime mold).